Reading from the N-terminus, the 728-residue chain is Putative auxin response factor 20 (728 aa).

Residues 119–233 (FFEKQLSPAD…ELLVGVRRAP (115 aa)) constitute a DNA-binding region (TF-B3 1). Low complexity-rich tracts occupy residues 665 to 689 (PQGS…TTSA) and 700 to 712 (ASSS…IIPS). The disordered stretch occupies residues 665 to 728 (PQGSDEEAAA…IVNPRDGSQG (64 aa)).

This sequence belongs to the ARF family. In terms of assembly, homo and heterodimers.

Its subcellular location is the nucleus. Auxin response factors (ARFs) are transcriptional factors that bind specifically to the DNA sequence 5'-TGTCTC-3' found in the auxin-responsive promoter elements (AuxREs). The chain is Putative auxin response factor 20 (ARF20) from Oryza sativa subsp. japonica (Rice).